Here is a 398-residue protein sequence, read N- to C-terminus: Acetylornithine aminotransferase (398 aa).

Phenylalanine 129 lines the pyridoxal 5'-phosphate pocket. Arginine 132 contacts N(2)-acetyl-L-ornithine. Residue 214-217 (DEVQ) participates in pyridoxal 5'-phosphate binding. Lysine 243 is modified (N6-(pyridoxal phosphate)lysine). Serine 271 contacts N(2)-acetyl-L-ornithine. Residue threonine 272 coordinates pyridoxal 5'-phosphate.

The protein belongs to the class-III pyridoxal-phosphate-dependent aminotransferase family. ArgD subfamily. In terms of assembly, homodimer. It depends on pyridoxal 5'-phosphate as a cofactor.

The protein localises to the cytoplasm. The catalysed reaction is N(2)-acetyl-L-ornithine + 2-oxoglutarate = N-acetyl-L-glutamate 5-semialdehyde + L-glutamate. It participates in amino-acid biosynthesis; L-arginine biosynthesis; N(2)-acetyl-L-ornithine from L-glutamate: step 4/4. This Neisseria meningitidis serogroup B (strain ATCC BAA-335 / MC58) protein is Acetylornithine aminotransferase.